A 275-amino-acid chain; its full sequence is 2,3,4,5-tetrahydropyridine-2,6-dicarboxylate N-succinyltransferase (275 aa).

The substrate site is built by R104 and D141.

This sequence belongs to the transferase hexapeptide repeat family. Homotrimer.

The protein resides in the cytoplasm. The enzyme catalyses (S)-2,3,4,5-tetrahydrodipicolinate + succinyl-CoA + H2O = (S)-2-succinylamino-6-oxoheptanedioate + CoA. It functions in the pathway amino-acid biosynthesis; L-lysine biosynthesis via DAP pathway; LL-2,6-diaminopimelate from (S)-tetrahydrodipicolinate (succinylase route): step 1/3. The sequence is that of 2,3,4,5-tetrahydropyridine-2,6-dicarboxylate N-succinyltransferase from Tolumonas auensis (strain DSM 9187 / NBRC 110442 / TA 4).